The following is a 164-amino-acid chain: UPF0262 protein Nham_0287 (164 aa).

It belongs to the UPF0262 family.

The sequence is that of UPF0262 protein Nham_0287 from Nitrobacter hamburgensis (strain DSM 10229 / NCIMB 13809 / X14).